Reading from the N-terminus, the 705-residue chain is Kinesin-like protein KIF2A (705 aa).

The segment at 65 to 185 is disordered; sequence DLVPDEDIEP…QQELREKRAQ (121 aa). Serine 75 is subject to Phosphoserine. Phosphothreonine is present on threonine 96. Serine 99 carries the post-translational modification Phosphoserine. An N6-acetyllysine modification is found at lysine 101. The segment covering 122–139 has biased composition (polar residues); the sequence is LPEQSSSAQQNGSVSDIS. A phosphoserine mark is found at serine 134 and serine 139. Residues 153 to 186 are a coiled coil; that stretch reads RRKSNCVKEVEKLQEKREKRRLQQQELREKRAQD. Positions 158 to 185 are enriched in basic and acidic residues; that stretch reads CVKEVEKLQEKREKRRLQQQELREKRAQ. In terms of domain architecture, Kinesin motor spans 222–552; sequence RICVCVRKRP…LRYANRVKEL (331 aa). ATP is bound at residue 312–319; sequence GQTGSGKT. Glutamine 572 carries the post-translational modification Phosphoserine. Positions 659 to 698 form a coiled coil; it reads ATQLEAILEQKIDILTELRDKVKSFRAALQEEEQASKQIN.

This sequence belongs to the TRAFAC class myosin-kinesin ATPase superfamily. Kinesin family. MCAK/KIF2 subfamily. Interacts with AURKA and PLK1. Interacts with PSRC1. Interacts with MCRS1; the interaction enhances recruitment of KIF2A to the minus ends of spindle microtubules which promotes chromosome alignment.

The protein resides in the cytoplasm. It is found in the cytoskeleton. Its subcellular location is the microtubule organizing center. The protein localises to the centrosome. It localises to the spindle pole. The protein resides in the spindle. In terms of biological role, plus end-directed microtubule-dependent motor required for normal brain development. May regulate microtubule dynamics during axonal growth. Required for normal progression through mitosis. Required for normal congress of chromosomes at the metaphase plate. Required for normal spindle dynamics during mitosis. Promotes spindle turnover. Implicated in formation of bipolar mitotic spindles. Has microtubule depolymerization activity. This is Kinesin-like protein KIF2A from Rattus norvegicus (Rat).